Reading from the N-terminus, the 466-residue chain is Trigger factor (466 aa).

The PPIase FKBP-type domain occupies 162–243 (GDVVSIDLSA…VRSVKERELP (82 aa)). Residues 428-466 (GNTIDTSEFFGKRVSAGEAEEAEPADEGAARAASDEATT) are disordered. Over residues 457–466 (ARAASDEATT) the composition is skewed to low complexity.

It belongs to the FKBP-type PPIase family. Tig subfamily.

The protein resides in the cytoplasm. The enzyme catalyses [protein]-peptidylproline (omega=180) = [protein]-peptidylproline (omega=0). Involved in protein export. Acts as a chaperone by maintaining the newly synthesized protein in an open conformation. Functions as a peptidyl-prolyl cis-trans isomerase. The sequence is that of Trigger factor from Mycobacterium tuberculosis (strain ATCC 25177 / H37Ra).